We begin with the raw amino-acid sequence, 42 residues long: Delta-hexatoxin-Iw1a (42 aa).

4 cysteine pairs are disulfide-bonded: Cys-1–Cys-15, Cys-8–Cys-20, Cys-14–Cys-31, and Cys-16–Cys-42.

The protein belongs to the neurotoxin 06 (delta-actx) family. As to expression, expressed by the venom gland.

It is found in the secreted. In terms of biological role, inhibits tetrodotoxin-sensitive sodium channels by binding to site 3. It slows the inactivation, causes a prolongation of action potential duration resulting in repetitive firing in autonomic and motor nerve fibers. Does not depolarize the resting potential. Does not affect tetrodotoxin-resistant sodium channels. This lethal neurotoxin is active on both insect and mammalian voltage-gated sodium channels (Nav). The protein is Delta-hexatoxin-Iw1a of Illawarra wisharti (Illawarra funnel-web spider).